The sequence spans 78 residues: Toxin OAIP 5 (78 aa).

An N-terminal signal peptide occupies residues 1–19 (MLIVILTCALLVIYHAAAA). The propeptide occupies 20–40 (EELEAKDVIESKALATLDEER). Intrachain disulfides connect Cys-43-Cys-56, Cys-47-Cys-70, and Cys-64-Cys-75.

Belongs to the neurotoxin 12 (Hwtx-2) family. 05 (OAIP-5) subfamily. Expressed by the venom gland.

It localises to the secreted. Its function is as follows. Probable ion channel inhibitor. Shows insecticidal activity when injected into mealworms. In Selenotypus plumipes (Australian featherleg tarantula), this protein is Toxin OAIP 5.